A 467-amino-acid chain; its full sequence is ATP-dependent protease ATPase subunit HslU (467 aa).

ATP is bound by residues V20, 62-67, D280, E345, and R417; that span reads GVGKTE.

The protein belongs to the ClpX chaperone family. HslU subfamily. As to quaternary structure, a double ring-shaped homohexamer of HslV is capped on each side by a ring-shaped HslU homohexamer. The assembly of the HslU/HslV complex is dependent on binding of ATP.

Its subcellular location is the cytoplasm. Its function is as follows. ATPase subunit of a proteasome-like degradation complex; this subunit has chaperone activity. The binding of ATP and its subsequent hydrolysis by HslU are essential for unfolding of protein substrates subsequently hydrolyzed by HslV. HslU recognizes the N-terminal part of its protein substrates and unfolds these before they are guided to HslV for hydrolysis. This chain is ATP-dependent protease ATPase subunit HslU, found in Enterococcus faecalis (strain ATCC 700802 / V583).